We begin with the raw amino-acid sequence, 41 residues long: Large ribosomal subunit protein bL36 (41 aa).

This sequence belongs to the bacterial ribosomal protein bL36 family.

The polypeptide is Large ribosomal subunit protein bL36 (Dinoroseobacter shibae (strain DSM 16493 / NCIMB 14021 / DFL 12)).